A 606-amino-acid chain; its full sequence is Granule-bound starch synthase 1, chloroplastic/amyloplastic (606 aa).

The transit peptide at 1 to 76 (MSALTTSQLA…GSRRFPSVVV (76 aa)) directs the protein to the chloroplast. Positions 29–67 (RHGFQGLKPRSPAGGDASSLSVTTSARATPKQQRSVQRG) are disordered. The segment covering 46–66 (SSLSVTTSARATPKQQRSVQR) has biased composition (polar residues). Lys97 contributes to the ADP-alpha-D-glucose binding site.

Belongs to the glycosyltransferase 1 family. Bacterial/plant glycogen synthase subfamily.

Its subcellular location is the plastid. It is found in the chloroplast. The protein localises to the amyloplast. The enzyme catalyses an NDP-alpha-D-glucose + [(1-&gt;4)-alpha-D-glucosyl](n) = [(1-&gt;4)-alpha-D-glucosyl](n+1) + a ribonucleoside 5'-diphosphate + H(+). It functions in the pathway glycan biosynthesis; starch biosynthesis. Required for the synthesis of amylose in endosperm. In Oryza sativa (Rice), this protein is Granule-bound starch synthase 1, chloroplastic/amyloplastic (WAXY).